Here is a 341-residue protein sequence, read N- to C-terminus: Mytilin-2 (341 aa).

Positions 1 to 24 are cleaved as a signal peptide; the sequence is MFKQSYQLCLVFLLFVCFYQSVKG.

As to expression, component of the organic matrix of calcified shell layers like nacre and prisms.

The protein resides in the secreted. In Mytilus californianus (California mussel), this protein is Mytilin-2.